The sequence spans 130 residues: Large ribosomal subunit protein uL14 (130 aa).

It belongs to the universal ribosomal protein uL14 family. Part of the 50S ribosomal subunit. Forms a cluster with proteins L3 and L19. In the 70S ribosome, L14 and L19 interact and together make contacts with the 16S rRNA in bridges B5 and B8.

Its function is as follows. Binds to 23S rRNA. Forms part of two intersubunit bridges in the 70S ribosome. This is Large ribosomal subunit protein uL14 from Helicobacter pylori (strain P12).